Here is a 379-residue protein sequence, read N- to C-terminus: SUN domain-containing protein 5 (379 aa).

The disordered stretch occupies residues 1–45 (MPRSSRSPGDPGALLEDVAHNPRPRRIAQRGRNTSRMAEDTSPNM). The Nuclear portion of the chain corresponds to 1 to 105 (MPRSSRSPGD…LLCQKLMEKT (105 aa)). Over residues 31–45 (GRNTSRMAEDTSPNM) the composition is skewed to polar residues. A helical membrane pass occupies residues 106–122 (GILLLCAFGFWMFSIHL). Topologically, residues 123 to 379 (PSKMKVWQDD…PHQNPYPKRD (257 aa)) are perinuclear space. The stretch at 141 to 182 (LRLYQEKVRHHSGEIQDLRGSMNQLIAKLQEMEAMSDEQKMA) forms a coiled coil. The 160-residue stretch at 205 to 364 (GASIDFEHTS…YRVRVHGSVA (160 aa)) folds into the SUN domain.

As to quaternary structure, probable homotrimer. Interacts with DNAJB13. In terms of processing, highly glycosylated in the Golgi apparatus during spermiogenesis. As to expression, sperm (at protein level). Widely expressed. Conflictingly shown to be specifically expressed in testis.

It is found in the nucleus inner membrane. The protein resides in the golgi apparatus. Plays an essential role in anchoring sperm head to the tail. Is responsible for the attachment of the coupling apparatus to the sperm nuclear envelope. The polypeptide is SUN domain-containing protein 5 (SUN5) (Homo sapiens (Human)).